A 489-amino-acid chain; its full sequence is Ecdysteroid UDP-glucosyltransferase (489 aa).

Residues 1–17 (MVFLIIALTLLATGARA) form the signal peptide.

This sequence belongs to the UDP-glycosyltransferase family.

Functionally, catalyzes the transfer of glucose from UDP-glucose to ecdysteroids which are insect molting hormones. Expression of egt interferes with normal insect development and block molting. The protein is Ecdysteroid UDP-glucosyltransferase (EGT) of Orgyia pseudotsugata (Douglas-fir tussock moth).